The primary structure comprises 70 residues: Small ribosomal subunit protein bS21 (70 aa).

It belongs to the bacterial ribosomal protein bS21 family.

In Nitratidesulfovibrio vulgaris (strain ATCC 29579 / DSM 644 / CCUG 34227 / NCIMB 8303 / VKM B-1760 / Hildenborough) (Desulfovibrio vulgaris), this protein is Small ribosomal subunit protein bS21.